A 159-amino-acid chain; its full sequence is Ribosomal RNA large subunit methyltransferase H (159 aa).

S-adenosyl-L-methionine-binding positions include Leu76, Gly108, and 127 to 132 (FSKMTF).

This sequence belongs to the RNA methyltransferase RlmH family. Homodimer.

It is found in the cytoplasm. It catalyses the reaction pseudouridine(1915) in 23S rRNA + S-adenosyl-L-methionine = N(3)-methylpseudouridine(1915) in 23S rRNA + S-adenosyl-L-homocysteine + H(+). Its function is as follows. Specifically methylates the pseudouridine at position 1915 (m3Psi1915) in 23S rRNA. In Clostridium kluyveri (strain NBRC 12016), this protein is Ribosomal RNA large subunit methyltransferase H.